The following is a 361-amino-acid chain: Glucose 1-dehydrogenase (361 aa).

Cys41 is a binding site for Zn(2+). Substrate is bound at residue Thr43. Residues His68 and Glu69 each coordinate Zn(2+). The substrate site is built by Glu119, Glu156, and Asn160. Residue Glu156 coordinates Zn(2+). NADP(+) contacts are provided by residues 216-218, 275-277, 304-306, and Lys349; these read NRH, FGT, and SVD. Asp306 serves as a coordination point for substrate.

Belongs to the zinc-containing alcohol dehydrogenase family. Glucose 1-dehydrogenase subfamily. As to quaternary structure, homotetramer. It depends on Zn(2+) as a cofactor.

It carries out the reaction D-glucose + NAD(+) = D-glucono-1,5-lactone + NADH + H(+). The enzyme catalyses D-glucose + NADP(+) = D-glucono-1,5-lactone + NADPH + H(+). The catalysed reaction is D-galactose + NAD(+) = D-galactono-1,4-lactone + NADH + H(+). It catalyses the reaction D-galactose + NADP(+) = D-galactono-1,5-lactone + NADPH + H(+). Functionally, catalyzes the NAD(P)(+)-dependent oxidation of D-glucose to D-gluconate via gluconolactone. Is also significantly active with galactose as substrate, but not with mannose or glucose 6-phosphate. Can utilize both NAD(+) and NADP(+) as electron acceptor, with a marked preference for NADP(+). Physiologically, may be involved in the degradation of both glucose and galactose through a non-phosphorylative variant of the Entner-Doudoroff pathway. This Thermoplasma acidophilum (strain ATCC 25905 / DSM 1728 / JCM 9062 / NBRC 15155 / AMRC-C165) protein is Glucose 1-dehydrogenase.